The primary structure comprises 388 residues: GTPase Obg (388 aa).

The region spanning 4 to 162 (SNFVDYVKIY…MTVILELKLL (159 aa)) is the Obg domain. The interval 18–45 (KGGRGSTHMRREKYTPNGGPDGGDGGRG) is disordered. Over residues 36-45 (GPDGGDGGRG) the composition is skewed to gly residues. Residues 163-329 (ADVGLVGFPN…LKDILWTELN (167 aa)) form the OBG-type G domain. GTP contacts are provided by residues 169–176 (GFPNAGKS), 194–198 (FTTLE), 216–219 (DIPG), 283–286 (TKSD), and 310–312 (SSV). Residues S176 and T196 each contribute to the Mg(2+) site. The interval 352–388 (LKDMGEDEELDYEYEDDGDGDEDDLDYEYEEEDWEDK) is disordered. A compositionally biased stretch (acidic residues) spans 356 to 388 (GEDEELDYEYEDDGDGDEDDLDYEYEEEDWEDK).

The protein belongs to the TRAFAC class OBG-HflX-like GTPase superfamily. OBG GTPase family. Monomer. It depends on Mg(2+) as a cofactor.

It is found in the cytoplasm. Functionally, an essential GTPase which binds GTP, GDP and possibly (p)ppGpp with moderate affinity, with high nucleotide exchange rates and a fairly low GTP hydrolysis rate. Plays a role in control of the cell cycle, stress response, ribosome biogenesis and in those bacteria that undergo differentiation, in morphogenesis control. The protein is GTPase Obg of Bacteroides fragilis (strain ATCC 25285 / DSM 2151 / CCUG 4856 / JCM 11019 / LMG 10263 / NCTC 9343 / Onslow / VPI 2553 / EN-2).